The following is a 453-amino-acid chain: Glutamate-rich protein 5 (453 aa).

3 disordered regions span residues methionine 1–arginine 38, asparagine 66–alanine 377, and threonine 394–leucine 453. Residues alanine 11–threonine 21 show a composition bias toward basic and acidic residues. Residue serine 155 is modified to Phosphoserine. Polar residues-rich tracts occupy residues leucine 230–leucine 243 and glutamine 271–arginine 283. 3 stretches are compositionally biased toward basic and acidic residues: residues glutamate 305 to glycine 332, isoleucine 364 to glutamate 374, and threonine 394 to glycine 403. Positions glutamate 404–methionine 413 are enriched in acidic residues. The segment covering glutamate 414 to threonine 424 has biased composition (basic and acidic residues).

In Bos taurus (Bovine), this protein is Glutamate-rich protein 5 (ERICH5).